The chain runs to 40 residues: Photosystem II reaction center protein J (40 aa).

A helical membrane pass occupies residues 8-28; sequence IPLWLVGTVAGILVIGLIGIF.

This sequence belongs to the PsbJ family. In terms of assembly, PSII is composed of 1 copy each of membrane proteins PsbA, PsbB, PsbC, PsbD, PsbE, PsbF, PsbH, PsbI, PsbJ, PsbK, PsbL, PsbM, PsbT, PsbX, PsbY, PsbZ, Psb30/Ycf12, at least 3 peripheral proteins of the oxygen-evolving complex and a large number of cofactors. It forms dimeric complexes.

It is found in the plastid. The protein localises to the chloroplast thylakoid membrane. One of the components of the core complex of photosystem II (PSII). PSII is a light-driven water:plastoquinone oxidoreductase that uses light energy to abstract electrons from H(2)O, generating O(2) and a proton gradient subsequently used for ATP formation. It consists of a core antenna complex that captures photons, and an electron transfer chain that converts photonic excitation into a charge separation. The protein is Photosystem II reaction center protein J of Gnetum parvifolium (Small-leaved jointfir).